The primary structure comprises 318 residues: Ribosomal RNA small subunit methyltransferase H (318 aa).

Residues 42–44 (GGH), Asp62, Phe86, Asp108, and Gln115 each bind S-adenosyl-L-methionine.

The protein belongs to the methyltransferase superfamily. RsmH family.

The protein resides in the cytoplasm. The enzyme catalyses cytidine(1402) in 16S rRNA + S-adenosyl-L-methionine = N(4)-methylcytidine(1402) in 16S rRNA + S-adenosyl-L-homocysteine + H(+). Functionally, specifically methylates the N4 position of cytidine in position 1402 (C1402) of 16S rRNA. This Yersinia pestis (strain Pestoides F) protein is Ribosomal RNA small subunit methyltransferase H.